A 214-amino-acid chain; its full sequence is Pyridoxine/pyridoxamine 5'-phosphate oxidase (214 aa).

Residues 9-12 and Lys-67 each bind substrate; that span reads RKDY. Residues 62–67, 77–78, Arg-83, Lys-84, and Gln-106 contribute to the FMN site; these read RMVLLK and FT. 3 residues coordinate substrate: Tyr-124, Arg-128, and Ser-132. FMN contacts are provided by residues 141-142 and Trp-186; that span reads QS. 192 to 194 is a substrate binding site; it reads RLH. Residue Arg-196 coordinates FMN.

The protein belongs to the pyridoxamine 5'-phosphate oxidase family. Homodimer. It depends on FMN as a cofactor.

The catalysed reaction is pyridoxamine 5'-phosphate + O2 + H2O = pyridoxal 5'-phosphate + H2O2 + NH4(+). It catalyses the reaction pyridoxine 5'-phosphate + O2 = pyridoxal 5'-phosphate + H2O2. Its pathway is cofactor metabolism; pyridoxal 5'-phosphate salvage; pyridoxal 5'-phosphate from pyridoxamine 5'-phosphate: step 1/1. It participates in cofactor metabolism; pyridoxal 5'-phosphate salvage; pyridoxal 5'-phosphate from pyridoxine 5'-phosphate: step 1/1. Catalyzes the oxidation of either pyridoxine 5'-phosphate (PNP) or pyridoxamine 5'-phosphate (PMP) into pyridoxal 5'-phosphate (PLP). The protein is Pyridoxine/pyridoxamine 5'-phosphate oxidase of Nostoc punctiforme (strain ATCC 29133 / PCC 73102).